Here is a 169-residue protein sequence, read N- to C-terminus: Prolyl-tRNA synthetase associated domain-containing protein 1 (169 aa).

Belongs to the PRORSD1 family.

This is Prolyl-tRNA synthetase associated domain-containing protein 1 (Prorsd1) from Mus musculus (Mouse).